The chain runs to 323 residues: GDP-mannose 4,6-dehydratase (323 aa).

NADP(+)-binding positions include 11-14 (TGQD), R36, 59-60 (DM), and 81-85 (LAAQS). Residue T126 is part of the active site. Residues E128 and Y150 each act as nucleophile in the active site. NADP(+)-binding residues include K154, H180, and R185.

This sequence belongs to the NAD(P)-dependent epimerase/dehydratase family. GDP-mannose 4,6-dehydratase subfamily. Homotetramer. Requires NADP(+) as cofactor.

It catalyses the reaction GDP-alpha-D-mannose = GDP-4-dehydro-alpha-D-rhamnose + H2O. Its pathway is bacterial outer membrane biogenesis; lipopolysaccharide biosynthesis. In terms of biological role, catalyzes the conversion of GDP-D-mannose to GDP-4-dehydro-6-deoxy-D-mannose. The polypeptide is GDP-mannose 4,6-dehydratase (Pseudomonas aeruginosa (strain ATCC 15692 / DSM 22644 / CIP 104116 / JCM 14847 / LMG 12228 / 1C / PRS 101 / PAO1)).